The chain runs to 681 residues: PTS system glucose-specific EIICBA component (681 aa).

The PTS EIIC type-1 domain maps to lysine 3–aspartate 414. The next 10 membrane-spanning stretches (helical) occupy residues leucine 16–methionine 36, methionine 73–alanine 93, isoleucine 126–alanine 146, phenylalanine 170–tryptophan 190, alanine 199–isoleucine 219, phenylalanine 273–tyrosine 293, valine 303–proline 323, phenylalanine 328–leucine 348, leucine 355–proline 375, and valine 383–valine 403. Residues threonine 425 to glutamate 506 enclose the PTS EIIB type-1 domain. Cysteine 447 serves as the catalytic Phosphocysteine intermediate; for EIIB activity. Residues aspartate 551 to glutamine 655 enclose the PTS EIIA type-1 domain. Residue histidine 603 is the Tele-phosphohistidine intermediate; for EIIA activity of the active site.

The protein resides in the cell membrane. The enzyme catalyses N(pros)-phospho-L-histidyl-[protein] + D-glucose(out) = D-glucose 6-phosphate(in) + L-histidyl-[protein]. In terms of biological role, the phosphoenolpyruvate-dependent sugar phosphotransferase system (sugar PTS), a major carbohydrate active transport system, catalyzes the phosphorylation of incoming sugar substrates concomitantly with their translocation across the cell membrane. This system is involved in glucose transport. The sequence is that of PTS system glucose-specific EIICBA component (ptsG) from Staphylococcus aureus (strain NCTC 8325 / PS 47).